The following is a 71-amino-acid chain: KRCYRTPDLKSQTCPPGEDLCYTKKWCADWCTSRGKVIELGCVATCPKVKPYEQITCCSTDNCNPHPKMKP.

Intrachain disulfides connect C3–C21, C14–C42, C27–C31, C46–C57, and C58–C63.

The protein belongs to the three-finger toxin family. Long-chain subfamily. Type II alpha-neurotoxin sub-subfamily. As to expression, expressed by the venom gland.

It localises to the secreted. In terms of biological role, binds with high affinity to muscular (alpha-1/CHRNA1) and neuronal (alpha-7/CHRNA7) nicotinic acetylcholine receptor (nAChR) and inhibits acetylcholine from binding to the receptor, thereby impairing neuromuscular and neuronal transmission. This is Long neurotoxin 1 from Naja melanoleuca (Forest cobra).